We begin with the raw amino-acid sequence, 360 residues long: Putative beta-glucosidase 15 (360 aa).

2 stretches are compositionally biased toward basic and acidic residues: residues 1–11 and 47–67; these read MARRRMGEEGK and GRRE…ERKG. Disordered stretches follow at residues 1 to 21 and 35 to 103; these read MARR…NGRQ and GWRS…RAER. Over residues 75 to 86 the composition is skewed to basic residues; it reads GKRRRERRRGGR. Tyrosine 183 provides a ligand contact to a beta-D-glucoside. A disulfide bond links cysteine 191 and cysteine 196. A beta-D-glucoside contacts are provided by residues glutamate 254, tryptophan 301, 308 to 309, and phenylalanine 317; that span reads EW. The Nucleophile role is filled by glutamate 254. N-linked (GlcNAc...) asparagine glycosylation occurs at asparagine 346.

This sequence belongs to the glycosyl hydrolase 1 family.

The catalysed reaction is Hydrolysis of terminal, non-reducing beta-D-glucosyl residues with release of beta-D-glucose.. This chain is Putative beta-glucosidase 15 (BGLU15), found in Oryza sativa subsp. japonica (Rice).